Consider the following 362-residue polypeptide: Carbamoyl phosphate synthase small chain (362 aa).

Residues 1–172 (MKAFLVLDNG…SKYIFGTHTG (172 aa)) form a CPSase region. Ser-45, Gly-224, and Gly-226 together coordinate L-glutamine. Residues 176–362 (KLAVYDYGVK…YDLVEKTKKG (187 aa)) form the Glutamine amidotransferase type-1 domain. Cys-252 serves as the catalytic Nucleophile. Residues Leu-253, Gln-256, Asn-294, Gly-296, and Phe-297 each coordinate L-glutamine. Residues His-335 and Glu-337 contribute to the active site.

Belongs to the CarA family. Composed of two chains; the small (or glutamine) chain promotes the hydrolysis of glutamine to ammonia, which is used by the large (or ammonia) chain to synthesize carbamoyl phosphate. Tetramer of heterodimers (alpha,beta)4.

It catalyses the reaction hydrogencarbonate + L-glutamine + 2 ATP + H2O = carbamoyl phosphate + L-glutamate + 2 ADP + phosphate + 2 H(+). The enzyme catalyses L-glutamine + H2O = L-glutamate + NH4(+). The protein operates within amino-acid biosynthesis; L-arginine biosynthesis; carbamoyl phosphate from bicarbonate: step 1/1. It participates in pyrimidine metabolism; UMP biosynthesis via de novo pathway; (S)-dihydroorotate from bicarbonate: step 1/3. Small subunit of the glutamine-dependent carbamoyl phosphate synthetase (CPSase). CPSase catalyzes the formation of carbamoyl phosphate from the ammonia moiety of glutamine, carbonate, and phosphate donated by ATP, constituting the first step of 2 biosynthetic pathways, one leading to arginine and/or urea and the other to pyrimidine nucleotides. The small subunit (glutamine amidotransferase) binds and cleaves glutamine to supply the large subunit with the substrate ammonia. The protein is Carbamoyl phosphate synthase small chain of Leptospira interrogans serogroup Icterohaemorrhagiae serovar Lai (strain 56601).